The chain runs to 415 residues: Serine hydroxymethyltransferase (415 aa).

(6S)-5,6,7,8-tetrahydrofolate contacts are provided by residues L119 and 123–125 (GHL). K228 is subject to N6-(pyridoxal phosphate)lysine. (6S)-5,6,7,8-tetrahydrofolate is bound at residue 353 to 355 (SAF).

Belongs to the SHMT family. In terms of assembly, homodimer. It depends on pyridoxal 5'-phosphate as a cofactor.

It is found in the cytoplasm. It catalyses the reaction (6R)-5,10-methylene-5,6,7,8-tetrahydrofolate + glycine + H2O = (6S)-5,6,7,8-tetrahydrofolate + L-serine. Its pathway is one-carbon metabolism; tetrahydrofolate interconversion. The protein operates within amino-acid biosynthesis; glycine biosynthesis; glycine from L-serine: step 1/1. Functionally, catalyzes the reversible interconversion of serine and glycine with tetrahydrofolate (THF) serving as the one-carbon carrier. Also exhibits THF-independent aldolase activity toward beta-hydroxyamino acids, producing glycine and aldehydes, via a retro-aldol mechanism. This Haloarcula marismortui (strain ATCC 43049 / DSM 3752 / JCM 8966 / VKM B-1809) (Halobacterium marismortui) protein is Serine hydroxymethyltransferase.